A 502-amino-acid polypeptide reads, in one-letter code: Glycerol kinase (502 aa).

Threonine 14 is a binding site for ADP. ATP-binding residues include threonine 14, threonine 15, and serine 16. Threonine 14 is a sn-glycerol 3-phosphate binding site. An ADP-binding site is contributed by arginine 18. Positions 84, 85, 136, and 246 each coordinate sn-glycerol 3-phosphate. Glycerol-binding residues include arginine 84, glutamate 85, tyrosine 136, aspartate 246, and glutamine 247. Positions 268 and 311 each coordinate ADP. Threonine 268, glycine 311, glutamine 315, and glycine 412 together coordinate ATP. Positions 412 and 416 each coordinate ADP.

It belongs to the FGGY kinase family. Homotetramer and homodimer (in equilibrium). Heterodimer with EIIA-Glc. Binds 1 zinc ion per glycerol kinase EIIA-Glc dimer. The zinc ion is important for dimerization.

It carries out the reaction glycerol + ATP = sn-glycerol 3-phosphate + ADP + H(+). It participates in polyol metabolism; glycerol degradation via glycerol kinase pathway; sn-glycerol 3-phosphate from glycerol: step 1/1. Activity of this regulatory enzyme is affected by several metabolites. Allosterically and non-competitively inhibited by fructose 1,6-bisphosphate (FBP) and unphosphorylated phosphocarrier protein EIIA-Glc (III-Glc), an integral component of the bacterial phosphotransferase (PTS) system. Functionally, key enzyme in the regulation of glycerol uptake and metabolism. Catalyzes the phosphorylation of glycerol to yield sn-glycerol 3-phosphate. The sequence is that of Glycerol kinase from Escherichia coli O127:H6 (strain E2348/69 / EPEC).